The sequence spans 924 residues: MNYVGQLAGQVFVTVKELYKGLNPATLSGCIDIIVIRQPNGSLQCSPFHVRFGKMGVLRSREKVVDIEINGESVDLHMKLGDNGEAFFVQETDNDQEIIPMYLATSPILSEGAARMESQLKRNSVDRIRCLDPTTAAQGLPPSDTPSTGSLGKKRRKRRRKAQLDNLKRDDNVNSSEDEDMFPIEMSSDEDTAPMDGSRTLPNDVPPFQDDIPKENFPSISTHPQSASYPSSDREWSPSPSSLVDCQRTPPHLAEGVLSSSCPLQSCHFHASESPSGSRPSTPKSDSELVSKSADRLTPKNNLEMLWLWGELPQAAKSSSPHKMKESSPLGSRKTPDKMNFQAIHSESSDTFSDQSPTMARGLLIHQSKAQTEMQFVNEEDLESLGAAAPPSPVAEELKAPYPNTAQSSSKTDSPSRKKDKRSRHLGADGVYLDDLTDMDPEVAALYFPKNGDPGGLPKQASDNGARSANQSPQSVGGSGIDSGVESTSDSLRDLPSIAISLCGGLSDHREITKDAFLEQAVSYQQFADNPAIIDDPNLVVKVGNKYYNWTTAAPLLLAMQAFQKPLPKATVESIMRDKMPKKGGRWWFSWRGRNATIKEESKPEQCLTGKGHNTGEQPAQLGLATRIKHESSSSDEEHAAAKPSGSSHLSLLSNVSYKKTLRLTSEQLKSLKLKNGPNDVVFSVTTQYQGTCRCEGTIYLWNWDDKVIISDIDGTITRSDTLGHILPTLGKDWTHQGIAKLYHKVSQNGYKFLYCSARAIGMADMTRGYLHWVNERGTVLPQGPLLLSPSSLFSALHREVIEKKPEKFKVQCLTDIKNLFFPNTEPFYAAFGNRPADVYSYKQVGVSLNRIFTVNPKGELVQEHAKTNISSYVRLCEVVDHVFPLLKRSHSCDFPCSDTFSNFTFWREPLPPFENQDMHSASA.

An N-LIP region spans residues 1–108; the sequence is MNYVGQLAGQ…IPMYLATSPI (108 aa). Residues S106 and S150 each carry the phosphoserine modification. Disordered stretches follow at residues 133–248 and 269–297; these read PTTA…DCQR and FHAS…ADRL. Basic residues predominate over residues 152–161; that stretch reads GKKRRKRRRK. The Nuclear localization signal signature appears at 153 to 158; the sequence is KKRRKR. The segment covering 162 to 172 has biased composition (basic and acidic residues); that stretch reads AQLDNLKRDDN. The span at 176–193 shows a compositional bias: acidic residues; sequence SEDEDMFPIEMSSDEDTA. 2 stretches are compositionally biased toward polar residues: residues 218 to 229 and 273 to 284; these read PSISTHPQSASY and ESPSGSRPSTPK. S285, S287, and S293 each carry phosphoserine. Over residues 285-297 the composition is skewed to basic and acidic residues; sequence SDSELVSKSADRL. At T298 the chain carries Phosphothreonine. 2 disordered regions span residues 314 to 426 and 446 to 490; these read QAAK…SRHL and LYFP…STSD. S328 bears the Phosphoserine mark. Residues 343–358 are compositionally biased toward polar residues; it reads AIHSESSDTFSDQSPT. A Phosphoserine modification is found at S392. Positions 404-413 are enriched in polar residues; sequence NTAQSSSKTD. Residue K459 is modified to N6-acetyllysine. A compositionally biased stretch (polar residues) spans 461-476; it reads ASDNGARSANQSPQSV. Residues S468, S472, and S483 each carry the phosphoserine modification. Residues K599 and K629 each participate in a glycyl lysine isopeptide (Lys-Gly) (interchain with G-Cter in SUMO) cross-link. A disordered region spans residues 627-649; that stretch reads RIKHESSSSDEEHAAAKPSGSSH. Positions 628–641 are enriched in basic and acidic residues; the sequence is IKHESSSSDEEHAA. Residue K629 is modified to N6-acetyllysine. Phosphoserine is present on residues S634 and S635. The C-LIP stretch occupies residues 658–864; that stretch reads YKKTLRLTSE…VNPKGELVQE (207 aa). Residues 712–716 carry the DXDXT motif motif; that stretch reads DIDGT. The LXXIL motif signature appears at 723–727; that stretch reads LGHIL. 2 positions are modified to phosphoserine: S921 and S923.

The protein belongs to the lipin family. Interacts (via LXXIL motif) with PPARA. Interacts with PPARGC1A. Interaction with PPARA and PPARGC1A leads to the formation of a complex that modulates gene transcription. Interacts with MEF2C. Requires Mg(2+) as cofactor. In terms of processing, phosphorylated at multiple sites in response to insulin. Phosphorylation is controlled by the mTOR signaling pathway. Phosphorylation is decreased by epinephrine. Phosphorylation may not directly affect the catalytic activity but may regulate the localization. Dephosphorylated by the CTDNEP1-CNEP1R1 complex. Phosphorylated at multiple sites by mTOR in response to insulin, leading to its inactivation. Phosphorylation does not affect the catalytic activity but regulates the localization. Phosphorylation is decreased by epinephrine. Dephosphorylated by the CTDNEP1-CNEP1R1 complex. Dephosphorylation following mTOR inhibition promotes its activity. Post-translationally, sumoylation is important in brain and is marginal in other tissues. Sumoylation facilitates nuclear localization of isoform 2 in neuronals cells and its transcriptional coactivator activity. In terms of processing, acetylation at Lys-459 and Lys-629 by KAT5 in response to fatty acids promotes translocation to the endoplasmic reticulum and synthesis of diacylglycerol. Specifically expressed in skeletal muscle. Also expressed prominently in adipose tissue, and testis. Lower expression also detected in kidney, lung, brain and liver. As to expression, predominant isoform in the liver. In terms of tissue distribution, predominant isoform in the brain.

Its subcellular location is the mitochondrion outer membrane. It is found in the cytoplasm. It localises to the nucleus membrane. The protein resides in the nucleus. The protein localises to the endoplasmic reticulum membrane. The enzyme catalyses a 1,2-diacyl-sn-glycero-3-phosphate + H2O = a 1,2-diacyl-sn-glycerol + phosphate. It carries out the reaction 1-octadecanoyl-2-(4Z,7Z,10Z,13Z,16Z,19Z-docosahexaenoyl)-sn-glycero-3-phosphate + H2O = 1-octadecanoyl-2-(4Z,7Z,10Z,13Z,16Z,19Z-docosahexaenoyl)-sn-glycerol + phosphate. The catalysed reaction is 1-octadecanoyl-2-(5Z,8Z,11Z,14Z-eicosatetraenoyl)-sn-glycero-3-phosphate + H2O = 1-octadecanoyl-2-(5Z,8Z,11Z,14Z-eicosatetraenoyl)-sn-glycerol + phosphate. It catalyses the reaction 1-octadecanoyl-2-(9Z,12Z-octadecadienoyl)-sn-glycero-3-phosphate + H2O = 1-octadecanoyl-2-(9Z,12Z)-octadecadienoyl-sn-glycerol + phosphate. The enzyme catalyses 1-octadecanoyl-2-(9Z-octadecenoyl)-sn-glycero-3-phosphate + H2O = 1-octadecanoyl-2-(9Z-octadecenoyl)-sn-glycerol + phosphate. It carries out the reaction 1-hexadecanoyl-2-(4Z,7Z,10Z,13Z,16Z,19Z-docosahexaenoyl)-sn-glycero-3-phosphate + H2O = 1-hexadecanoyl-2-(4Z,7Z,10Z,13Z,16Z,19Z-docosahexaenoyl)-sn-glycerol + phosphate. The catalysed reaction is 1,2-dioctadecanoyl-sn-glycero-3-phosphate + H2O = 1,2-dioctadecanoyl-sn-glycerol + phosphate. It catalyses the reaction 1-hexadecanoyl-2-(5Z,8Z,11Z,14Z-eicosatetraenoyl)-sn-glycero-3-phosphate + H2O = 1-hexadecanoyl-2-(5Z,8Z,11Z,14Z-eicosatetraenoyl)-sn-glycerol + phosphate. The enzyme catalyses 1-hexadecanoyl-2-(9Z,12Z-octadecadienoyl)-sn-glycero-3-phosphate + H2O = 1-hexadecanoyl-2-(9Z,12Z-octadecadienoyl)-sn-glycerol + phosphate. It carries out the reaction 1-hexadecanoyl-2-(9Z-octadecenoyl)-sn-glycero-3-phosphate + H2O = 1-hexadecanoyl-2-(9Z-octadecenoyl)-sn-glycerol + phosphate. The catalysed reaction is 1,2-di-(4Z,7Z,10Z,13Z,16Z,19Z-docosahexaenoyl)-sn-glycero-3-phosphate + H2O = 1,2-di-(4Z,7Z,10Z,13Z,16Z,19Z-docosahexaenoyl)-sn-glycerol + phosphate. It catalyses the reaction 1,2-di-(5Z,8Z,11Z,14Z)-eicosatetraenoyl-sn-glycero-3-phosphate + H2O = 1,2-di-(5Z,8Z,11Z,14Z)-eicosatetraenoyl-sn-glycerol + phosphate. The enzyme catalyses 1,2-di-(9Z,12Z-octadecadienoyl)-sn-glycero-3-phosphate + H2O = 1,2-di-(9Z,12Z-octadecadienoyl)-sn-glycerol + phosphate. It carries out the reaction 1,2-di-(9Z-octadecenoyl)-sn-glycero-3-phosphate + H2O = 1,2-di-(9Z-octadecenoyl)-sn-glycerol + phosphate. The catalysed reaction is 1,2-dihexadecanoyl-sn-glycero-3-phosphate + H2O = 1,2-dihexadecanoyl-sn-glycerol + phosphate. Inhibited by N-ethylmaleimide treatment. In terms of biological role, acts as a magnesium-dependent phosphatidate phosphatase enzyme which catalyzes the conversion of phosphatidic acid to diacylglycerol during triglyceride, phosphatidylcholine and phosphatidylethanolamine biosynthesis and therefore controls the metabolism of fatty acids at different levels. Is involved in adipocyte differentiation. Also acts as nuclear transcriptional coactivator for PPARGC1A/PPARA regulatory pathway to modulate lipid metabolism gene expression. Functionally, recruited at the mitochondrion outer membrane and is involved in mitochondrial fission by converting phosphatidic acid to diacylglycerol. The polypeptide is Phosphatidate phosphatase LPIN1 (Lpin1) (Mus musculus (Mouse)).